The following is a 428-amino-acid chain: Glutamate-1-semialdehyde 2,1-aminomutase (428 aa).

Lysine 267 bears the N6-(pyridoxal phosphate)lysine mark.

It belongs to the class-III pyridoxal-phosphate-dependent aminotransferase family. HemL subfamily. Homodimer. Pyridoxal 5'-phosphate is required as a cofactor.

It localises to the cytoplasm. The enzyme catalyses (S)-4-amino-5-oxopentanoate = 5-aminolevulinate. The protein operates within porphyrin-containing compound metabolism; protoporphyrin-IX biosynthesis; 5-aminolevulinate from L-glutamyl-tRNA(Glu): step 2/2. The polypeptide is Glutamate-1-semialdehyde 2,1-aminomutase (Persephonella marina (strain DSM 14350 / EX-H1)).